The following is a 465-amino-acid chain: Hydroxyacid-oxoacid transhydrogenase, mitochondrial (465 aa).

Lys-443 bears the N6-acetyllysine mark. Phosphoserine is present on Ser-450.

Belongs to the iron-containing alcohol dehydrogenase family. Hydroxyacid-oxoacid transhydrogenase subfamily. Expressed in white and brown adipose tissues, liver, and kidney. Expression is differentiation-dependent during in vitro brown and white adipogenesis.

It localises to the mitochondrion. The catalysed reaction is (S)-3-hydroxybutanoate + 2-oxoglutarate = (R)-2-hydroxyglutarate + acetoacetate. It carries out the reaction 4-hydroxybutanoate + 2-oxoglutarate = (R)-2-hydroxyglutarate + succinate semialdehyde. Catalyzes the cofactor-independent reversible oxidation of gamma-hydroxybutyrate (GHB) to succinic semialdehyde (SSA) coupled to reduction of 2-ketoglutarate (2-KG) to D-2-hydroxyglutarate (D-2-HG). L-3-hydroxybutyrate (L-3-OHB) is also a substrate for HOT when using 2-KG as hydrogen acceptor, resulting in the formation of D-2-HG. The sequence is that of Hydroxyacid-oxoacid transhydrogenase, mitochondrial (Adhfe1) from Mus musculus (Mouse).